A 151-amino-acid polypeptide reads, in one-letter code: Guanylate kinase homolog (151 aa).

The region spanning 1–141 is the Guanylate kinase-like domain; that stretch reads MEREGVDYHY…AYSKLIQILQ (141 aa).

Belongs to the guanylate kinase family.

The sequence is that of Guanylate kinase homolog from Bos taurus (Bovine).